We begin with the raw amino-acid sequence, 316 residues long: Olfactory receptor 12D3 (316 aa).

At 1–23 (MENVTTMNEFLLLGLTGVQELQP) the chain is on the extracellular side. A glycan (N-linked (GlcNAc...) asparagine) is linked at asparagine 3. A helical membrane pass occupies residues 24 to 44 (FFFGIFLIIYLINLIGNGSIL). Residues 45–52 (VMVVLEPQ) lie on the Cytoplasmic side of the membrane. A helical membrane pass occupies residues 53 to 73 (LHSPMYFFLGNLSCLDISYSS). The Extracellular portion of the chain corresponds to 74–97 (VTLPKLLVNLVCSRRAISFLGCIT). An intrachain disulfide couples cysteine 95 to cysteine 187. Residues 98–118 (QLHFFHFLGSTEAILLAIMAF) form a helical membrane-spanning segment. At 119–137 (DRFVAICNPLRYTVIMNPQ) the chain is on the cytoplasmic side. Residues 138 to 158 (VCILLAAAAWLISFFYALMHS) traverse the membrane as a helical segment. Residues 159–195 (VMTAHLSFCGSQKLNHFFYDVKPLLELACSDTLLNQW) are Extracellular-facing. The chain crosses the membrane as a helical span at residues 196 to 215 (LLSIVTGSISMGAFFLTLLS). The Cytoplasmic segment spans residues 216–236 (CFYVIGFLLFKNRSCRILHKA). Residues 237-257 (LSTCASHFMVVCLFYGPVGFT) form a helical membrane-spanning segment. The Extracellular portion of the chain corresponds to 258–270 (YIRPASATSMIQD). Residues 271 to 291 (RIMAIMYSAVTPVLNPLIYTL) traverse the membrane as a helical segment. Residues 292–316 (RNKEVMMALKKIFGRKLFKDWQQHH) are Cytoplasmic-facing.

It belongs to the G-protein coupled receptor 1 family.

The protein localises to the cell membrane. In terms of biological role, odorant receptor. This Homo sapiens (Human) protein is Olfactory receptor 12D3 (OR12D3).